The chain runs to 57 residues: Potassium channel toxin alpha-KTx 26.3 (57 aa).

An N-terminal signal peptide occupies residues 1-15 (MSGLSVFILIALVLS). A propeptide spanning residues 16–24 (VIIDVLNNS) is cleaved from the precursor. Cystine bridges form between cysteine 30/cysteine 48, cysteine 34/cysteine 53, and cysteine 38/cysteine 55.

The protein belongs to the short scorpion toxin superfamily. Potassium channel inhibitor family. Alpha-KTx 26 subfamily. Expressed by the venom gland.

The protein resides in the secreted. Functionally, recombinant toxin that reversibly inhibits the potassium current of mKv1.3/KCNA3 channel stably expressed in COS7 cells (IC(50)=150 nM). The chain is Potassium channel toxin alpha-KTx 26.3 from Mesobuthus gibbosus (Mediterranean checkered scorpion).